The chain runs to 393 residues: Upstream-binding factor 1-like protein 1 (393 aa).

2 DNA-binding regions (HMG box) span residues P100 to R168 and Q222 to L288. The segment at K308 to V393 is disordered. Residues E365–S377 are compositionally biased toward basic and acidic residues.

The protein resides in the cytoplasm. It is found in the nucleus. In terms of biological role, essential for proliferation of the inner cell mass and trophectodermal cells in peri-implantation development. The protein is Upstream-binding factor 1-like protein 1 of Homo sapiens (Human).